We begin with the raw amino-acid sequence, 342 residues long: Ferredoxin--NADP reductase (342 aa).

FAD-binding residues include cysteine 17, aspartate 36, glutamine 44, tyrosine 49, isoleucine 89, phenylalanine 124, aspartate 289, and threonine 330.

Belongs to the ferredoxin--NADP reductase type 2 family. In terms of assembly, homodimer. FAD is required as a cofactor.

It catalyses the reaction 2 reduced [2Fe-2S]-[ferredoxin] + NADP(+) + H(+) = 2 oxidized [2Fe-2S]-[ferredoxin] + NADPH. The sequence is that of Ferredoxin--NADP reductase from Rhodopseudomonas palustris (strain HaA2).